Reading from the N-terminus, the 196-residue chain is Ribosome-binding factor A (196 aa).

It belongs to the RbfA family. As to quaternary structure, monomer. Binds 30S ribosomal subunits, but not 50S ribosomal subunits or 70S ribosomes.

It localises to the cytoplasm. Functionally, one of several proteins that assist in the late maturation steps of the functional core of the 30S ribosomal subunit. Associates with free 30S ribosomal subunits (but not with 30S subunits that are part of 70S ribosomes or polysomes). Required for efficient processing of 16S rRNA. May interact with the 5'-terminal helix region of 16S rRNA. The chain is Ribosome-binding factor A from Tropheryma whipplei (strain TW08/27) (Whipple's bacillus).